The chain runs to 539 residues: Eukaryotic translation initiation factor 3 subunit L (539 aa).

Residues 306–514 (TFSDILLYIQ…IHIADTKVSH (209 aa)) enclose the PCI domain.

Belongs to the eIF-3 subunit L family. In terms of assembly, component of the eukaryotic translation initiation factor 3 (eIF-3) complex. The eIF-3 complex interacts with pix.

The protein resides in the cytoplasm. In terms of biological role, component of the eukaryotic translation initiation factor 3 (eIF-3) complex, which is involved in protein synthesis of a specialized repertoire of mRNAs and, together with other initiation factors, stimulates binding of mRNA and methionyl-tRNAi to the 40S ribosome. The eIF-3 complex specifically targets and initiates translation of a subset of mRNAs involved in cell proliferation. This is Eukaryotic translation initiation factor 3 subunit L from Drosophila melanogaster (Fruit fly).